The sequence spans 242 residues: Segregation and condensation protein A (242 aa).

The protein belongs to the ScpA family. Component of a cohesin-like complex composed of ScpA, ScpB and the Smc homodimer, in which ScpA and ScpB bind to the head domain of Smc. The presence of the three proteins is required for the association of the complex with DNA.

It localises to the cytoplasm. In terms of biological role, participates in chromosomal partition during cell division. May act via the formation of a condensin-like complex containing Smc and ScpB that pull DNA away from mid-cell into both cell halves. The protein is Segregation and condensation protein A of Streptococcus pneumoniae serotype 19F (strain G54).